The chain runs to 1070 residues: DNA-directed RNA polymerase subunit beta (1070 aa).

This sequence belongs to the RNA polymerase beta chain family. As to quaternary structure, in plastids the minimal PEP RNA polymerase catalytic core is composed of four subunits: alpha, beta, beta', and beta''. When a (nuclear-encoded) sigma factor is associated with the core the holoenzyme is formed, which can initiate transcription.

It is found in the plastid. The protein resides in the chloroplast. It carries out the reaction RNA(n) + a ribonucleoside 5'-triphosphate = RNA(n+1) + diphosphate. Its function is as follows. DNA-dependent RNA polymerase catalyzes the transcription of DNA into RNA using the four ribonucleoside triphosphates as substrates. The polypeptide is DNA-directed RNA polymerase subunit beta (Solanum tuberosum (Potato)).